The following is a 920-amino-acid chain: Ubiquitin ligase-binding protein BUL2 (920 aa).

Over residues 1-10 (MTFTFSTSSR) the composition is skewed to polar residues. The interval 1-89 (MTFTFSTSSR…EENSLEMDCT (89 aa)) is disordered. Thr-22 is subject to Phosphothreonine. Residues 35–57 (QQLSSNSTDNSLHPNSGQTPRAS) show a composition bias toward polar residues. The span at 73–82 (DRLRQEREEN) shows a compositional bias: basic and acidic residues. The PY-motif signature appears at 129-133 (FPPSY). Ser-557 is modified (phosphoserine).

It belongs to the BUL1 family. In terms of assembly, component of the RSP5-BUL1/2 ubiquitin ligase complex composed of at least RSP5 and BUL1 or BUL2.

The protein resides in the cytoplasm. The protein operates within protein modification; protein ubiquitination. In terms of biological role, component of a RSP5 ubiquitin ligase complex which specifies polyubiquitination and intracellular trafficking of the general amino acid permease GAP1 as well as other permeases such as PMA1. The RSP5-BUL1/2 complex is also necessary for the heat-shock element (HSE)-mediated gene expression, nitrogen starvation GLN3-dependent transcription and pressure-induced differential regulation of the 2 tryptophan permeases TAT1 and TAT2. The chain is Ubiquitin ligase-binding protein BUL2 (BUL2) from Saccharomyces cerevisiae (strain ATCC 204508 / S288c) (Baker's yeast).